A 92-amino-acid polypeptide reads, in one-letter code: Progonadoliberin-1 (92 aa).

Positions 1 to 23 (MGLIPKLLAGLVLLTLCVENGSG) are cleaved as a signal peptide. At Gln24 the chain carries Pyrrolidone carboxylic acid. The residue at position 33 (Gly33) is a Glycine amide.

This sequence belongs to the GnRH family. Post-translationally, the precursor is cleaved by ACE, which removes the Gly-Lys-Arg peptide at the C-terminus, leading to mature hormone. The mature form of Gonadoliberin-1 is also cleaved and degraded by ACE.

Its subcellular location is the secreted. Functionally, stimulates the secretion of gonadotropins; it stimulates the secretion of both luteinizing and follicle-stimulating hormones. This chain is Progonadoliberin-1 (GNRH1), found in Cavia porcellus (Guinea pig).